Consider the following 116-residue polypeptide: Vitelline membrane protein Vm32E (116 aa).

Residues 1–17 form the signal peptide; the sequence is MKIVAFTLVAFVALAGA. Positions 36–73 constitute a VM domain; it reads GYPAPPCPTNYLFSCQPNLAPAPCAQEAPAYGSAGAYT.

Belongs to the vitelline membrane family.

It is found in the secreted. Its function is as follows. Major early eggshell protein. This Drosophila santomea (Fruit fly) protein is Vitelline membrane protein Vm32E.